The sequence spans 508 residues: Photosystem II CP47 reaction center protein (508 aa).

The next 6 helical transmembrane spans lie at 21–36 (SVHI…WAGS), 101–115 (IVFS…IWHW), 140–156 (GIHL…FGAF), 203–218 (IAAG…FHLS), 237–252 (VLSS…AFVV), and 457–472 (SFAL…HGSR).

It belongs to the PsbB/PsbC family. PsbB subfamily. PSII is composed of 1 copy each of membrane proteins PsbA, PsbB, PsbC, PsbD, PsbE, PsbF, PsbH, PsbI, PsbJ, PsbK, PsbL, PsbM, PsbT, PsbX, PsbY, PsbZ, Psb30/Ycf12, at least 3 peripheral proteins of the oxygen-evolving complex and a large number of cofactors. It forms dimeric complexes. It depends on Binds multiple chlorophylls. PSII binds additional chlorophylls, carotenoids and specific lipids. as a cofactor.

It localises to the plastid. The protein localises to the chloroplast thylakoid membrane. In terms of biological role, one of the components of the core complex of photosystem II (PSII). It binds chlorophyll and helps catalyze the primary light-induced photochemical processes of PSII. PSII is a light-driven water:plastoquinone oxidoreductase, using light energy to abstract electrons from H(2)O, generating O(2) and a proton gradient subsequently used for ATP formation. The protein is Photosystem II CP47 reaction center protein of Capsella bursa-pastoris (Shepherd's purse).